Here is a 306-residue protein sequence, read N- to C-terminus: Oligopeptide transport system permease protein OppB (306 aa).

Over 1-11 (MLKFILRRCLE) the chain is Cytoplasmic. Residues 12–32 (AIPTLFILITISFFMMRLAPG) form a helical membrane-spanning segment. At 33–99 (SPFTGERTLP…VASSFPVSAK (67 aa)) the chain is on the periplasmic side. The 200-residue stretch at 94-293 (FPVSAKLGAA…ALTILFNAIV (200 aa)) folds into the ABC transmembrane type-1 domain. The helical transmembrane segment at 100-120 (LGAAAFFLAVILGVSAGVIAA) threads the bilayer. Residues 121–137 (LKQNTKWDYTVMGLAMT) lie on the Cytoplasmic side of the membrane. Residues 138–158 (GVVIPSFVVAPLLVMIFAIIL) form a helical membrane-spanning segment. Residues 159 to 169 (HWLPGGGWNGG) lie on the Periplasmic side of the membrane. Residues 170 to 190 (ALKFMILPMVALSLAYIASIA) form a helical membrane-spanning segment. The Cytoplasmic segment spans residues 191 to 229 (RITRGSMIEVLHSNFIRTARAKGLPMRRIILRHALKPAL). Residues 230–250 (LPVLSYMGPAFVGIITGSMVI) traverse the membrane as a helical segment. The Periplasmic portion of the chain corresponds to 251–279 (ETIYGLPGIGQLFVNGALNRDYSLVLSLT). A helical membrane pass occupies residues 280 to 300 (ILVGALTILFNAIVDVLYAVI). At 301 to 306 (DPKIRY) the chain is on the cytoplasmic side.

It belongs to the binding-protein-dependent transport system permease family. OppBC subfamily. In terms of assembly, the complex is composed of two ATP-binding proteins (OppD and OppF), two transmembrane proteins (OppB and OppC) and a solute-binding protein (OppA).

Its subcellular location is the cell inner membrane. Part of the ABC transporter complex OppABCDF involved in the uptake of oligopeptides. Probably responsible for the translocation of the substrate across the membrane. This is Oligopeptide transport system permease protein OppB (oppB) from Shigella flexneri.